Here is a 308-residue protein sequence, read N- to C-terminus: Transaldolase (308 aa).

The active-site Schiff-base intermediate with substrate is Lys-125.

Belongs to the transaldolase family. Type 1 subfamily. Homodimer.

The protein resides in the cytoplasm. It catalyses the reaction D-sedoheptulose 7-phosphate + D-glyceraldehyde 3-phosphate = D-erythrose 4-phosphate + beta-D-fructose 6-phosphate. The protein operates within carbohydrate degradation; pentose phosphate pathway; D-glyceraldehyde 3-phosphate and beta-D-fructose 6-phosphate from D-ribose 5-phosphate and D-xylulose 5-phosphate (non-oxidative stage): step 2/3. Functionally, transaldolase is important for the balance of metabolites in the pentose-phosphate pathway. The chain is Transaldolase from Pseudomonas fluorescens (strain ATCC BAA-477 / NRRL B-23932 / Pf-5).